A 320-amino-acid chain; its full sequence is Geranylgeranyl pyrophosphate synthase (320 aa).

Lys-35, Arg-38, and His-67 together coordinate isopentenyl diphosphate. Mg(2+)-binding residues include Asp-74 and Asp-78. Arg-83 provides a ligand contact to dimethylallyl diphosphate. Arg-84 lines the isopentenyl diphosphate pocket. 5 residues coordinate dimethylallyl diphosphate: Lys-168, Thr-169, Gln-206, Lys-223, and Lys-233.

Belongs to the FPP/GGPP synthase family. The cofactor is Mg(2+).

It localises to the cytoplasm. It carries out the reaction isopentenyl diphosphate + dimethylallyl diphosphate = (2E)-geranyl diphosphate + diphosphate. It catalyses the reaction isopentenyl diphosphate + (2E)-geranyl diphosphate = (2E,6E)-farnesyl diphosphate + diphosphate. The enzyme catalyses isopentenyl diphosphate + (2E,6E)-farnesyl diphosphate = (2E,6E,10E)-geranylgeranyl diphosphate + diphosphate. The protein operates within isoprenoid biosynthesis; farnesyl diphosphate biosynthesis; farnesyl diphosphate from geranyl diphosphate and isopentenyl diphosphate: step 1/1. It participates in isoprenoid biosynthesis; geranyl diphosphate biosynthesis; geranyl diphosphate from dimethylallyl diphosphate and isopentenyl diphosphate: step 1/1. It functions in the pathway isoprenoid biosynthesis; geranylgeranyl diphosphate biosynthesis; geranylgeranyl diphosphate from farnesyl diphosphate and isopentenyl diphosphate: step 1/1. In terms of biological role, catalyzes the trans-addition of the 3 molecules of IPP onto DMAPP to form geranylgeranyl pyrophosphate. May be involved in vesicle trafficking and protein sorting. This Eremothecium gossypii (strain ATCC 10895 / CBS 109.51 / FGSC 9923 / NRRL Y-1056) (Yeast) protein is Geranylgeranyl pyrophosphate synthase (BTS1).